The sequence spans 154 residues: Protein X (154 aa).

Residues 68-117 are mitochondrial targeting sequence; the sequence is PCALRFTSARRMETTVNAHQFLPKVLHKRTLGLSVMSTTDLEAYFKDCLF.

It belongs to the orthohepadnavirus protein X family. May form homodimer. May interact with host CEBPA, CFLAR, CREB1, DDB1, E4F1, HBXIP, HSPD1/HSP60, NFKBIA, POLR2E and SMAD4. Interacts with host SMC5-SMC6 complex and induces its degradation. Interacts with host TRPC4AP; leading to prevent ubiquitination of TRPC4AP. Interacts with host PLSCR1; this interaction promotes ubiquitination and degradation of HBx and impairs HBx-mediated cell proliferation. Post-translationally, a fraction may be phosphorylated in insect cells and HepG2 cells, a human hepatoblastoma cell line. Phosphorylated in vitro by host protein kinase C or mitogen-activated protein kinase. N-acetylated in insect cells.

It is found in the host cytoplasm. Its subcellular location is the host nucleus. The protein resides in the host mitochondrion. Multifunctional protein that plays a role in silencing host antiviral defenses and promoting viral transcription. Does not seem to be essential for HBV infection. May be directly involved in development of cirrhosis and liver cancer (hepatocellular carcinoma). Most of cytosolic activities involve modulation of cytosolic calcium. The effect on apoptosis is controversial depending on the cell types in which the studies have been conducted. May induce apoptosis by localizing in mitochondria and causing loss of mitochondrial membrane potential. May also modulate apoptosis by binding host CFLAR, a key regulator of the death-inducing signaling complex (DISC). Promotes viral transcription by using the host E3 ubiquitin ligase DDB1 to target the SMC5-SMC6 complex to proteasomal degradation. This host complex would otherwise bind to viral episomal DNA, and prevents its transcription. Moderately stimulates transcription of many different viral and cellular transcription elements. Promoters and enhancers stimulated by HBx contain DNA binding sites for NF-kappa-B, AP-1, AP-2, c-EBP, ATF/CREB, or the calcium-activated factor NF-AT. In Hepatitis B virus genotype D (isolate France/alpha1/1989) (HBV-D), this protein is Protein X.